Reading from the N-terminus, the 216-residue chain is NKG2-D type II integral membrane protein (216 aa).

Residues 1 to 51 (MGWIRGRRSRHSWEMSEFHNYNLDLAKNDFSTRWQKQRCPVIKSKCRENTS) lie on the Cytoplasmic side of the membrane. Residues 52-72 (PLFFCCFIAVAMGIRFIVMVT) traverse the membrane as a helical; Signal-anchor for type II membrane protein segment. The Extracellular portion of the chain corresponds to 73–216 (IWSAVFLNSL…NTYICMQRTV (144 aa)). 2 cysteine pairs are disulfide-bonded: Cys-96/Cys-105 and Cys-99/Cys-110. The region spanning 98-213 (PCPKNWICYK…STPNTYICMQ (116 aa)) is the C-type lectin domain. Residues Asn-115, Asn-131, Asn-163, and Asn-202 are each glycosylated (N-linked (GlcNAc...) asparagine). Disulfide bonds link Cys-127–Cys-211 and Cys-189–Cys-203.

In terms of assembly, homodimer; disulfide-linked. Heterohexamer composed of two subunits of KLRK1 and four subunits of HCST/DAP10. Interacts (via transmembrane domain) with HCST/DAP10 (via transmembrane domain); the interaction is required for KLRK1 NK cell surface and induces NK cell-mediated cytotoxicity. Can form disulfide-bonded heterodimer with CD94. Interacts with CEACAM1; recruits PTPN6 that dephosphorylates VAV1.

It is found in the cell membrane. In terms of biological role, functions as an activating and costimulatory receptor involved in immunosurveillance upon binding to various cellular stress-inducible ligands displayed at the surface of autologous tumor cells and virus-infected cells. Provides both stimulatory and costimulatory innate immune responses on activated killer (NK) cells, leading to cytotoxic activity. Acts as a costimulatory receptor for T-cell receptor (TCR) in CD8(+) T-cell-mediated adaptive immune responses by amplifying T-cell activation. Stimulates perforin-mediated elimination of ligand-expressing tumor cells. Signaling involves calcium influx, culminating in the expression of TNF-alpha. Participates in NK cell-mediated bone marrow graft rejection. May play a regulatory role in differentiation and survival of NK cells. Binds to ligands belonging to various subfamilies of MHC class I-related glycoproteins. The polypeptide is NKG2-D type II integral membrane protein (KLRK1) (Pongo pygmaeus (Bornean orangutan)).